The sequence spans 347 residues: Beta-hexosaminidase (347 aa).

Residues Asp-62, Arg-70, Arg-134, and 164 to 165 each bind substrate; that span reads KH. Catalysis depends on His-177, which acts as the Proton donor/acceptor. Asp-249 (nucleophile) is an active-site residue.

This sequence belongs to the glycosyl hydrolase 3 family. NagZ subfamily.

It is found in the cytoplasm. The catalysed reaction is Hydrolysis of terminal non-reducing N-acetyl-D-hexosamine residues in N-acetyl-beta-D-hexosaminides.. It participates in cell wall biogenesis; peptidoglycan recycling. In terms of biological role, plays a role in peptidoglycan recycling by cleaving the terminal beta-1,4-linked N-acetylglucosamine (GlcNAc) from peptide-linked peptidoglycan fragments, giving rise to free GlcNAc, anhydro-N-acetylmuramic acid and anhydro-N-acetylmuramic acid-linked peptides. In Mannheimia succiniciproducens (strain KCTC 0769BP / MBEL55E), this protein is Beta-hexosaminidase.